A 118-amino-acid chain; its full sequence is C-X-C motif chemokine 17 (118 aa).

Positions 1 to 22 (MKVLISSLLLLLPLMLMSVVSS) are cleaved as a signal peptide. Intrachain disulfides connect C74–C102 and C76–C109.

Belongs to the intercrine alpha (chemokine CxC) family.

The protein resides in the secreted. Its function is as follows. Chemokine that acts as a chemoattractant for monocytes, macrophages and dendritic cells. Plays a role in angiogenesis and possibly in the development of tumors. Acts as an anti-inflammatory in the stomach. May play a role in the innate defense against infections. Activates the C-X-C chemokine receptor GPR35 to induce a rapid and transient rise in the level of intracellular calcium ions. This chain is C-X-C motif chemokine 17 (CXCL17), found in Bos taurus (Bovine).